The following is a 450-amino-acid chain: Probable rhamnogalacturonase E (450 aa).

An N-terminal signal peptide occupies residues 1-22; it reads MTWSTSFLSVHFFAFITTSIHA. A disulfide bond links Cys43 and Cys69. N-linked (GlcNAc...) asparagine glycans are attached at residues Asn54, Asn92, and Asn131. Residue Asp222 is the Proton donor of the active site. An intrachain disulfide couples Cys224 to Cys241. 2 N-linked (GlcNAc...) asparagine glycosylation sites follow: Asn242 and Asn257. His297 is an active-site residue. N-linked (GlcNAc...) asparagine glycosylation is found at Asn324 and Asn329. 2 cysteine pairs are disulfide-bonded: Cys347-Cys353 and Cys375-Cys384.

Belongs to the glycosyl hydrolase 28 family.

The protein resides in the secreted. Functionally, pectinolytic enzymes consist of four classes of enzymes: pectine lyase, polygalacturonase, pectin methylesterase and rhamnogalacturonase. Hydrolyzes alpha-D-galacturonopyranosyl-(1,2)-alpha-L-rhamnopyranosyl linkages in the backbone of the hairy regions of pectins. The chain is Probable rhamnogalacturonase E (rhgE) from Aspergillus niger.